A 435-amino-acid polypeptide reads, in one-letter code: Diguanylate cyclase TpbB (435 aa).

Residues 1–22 (MNRRRRYTGSNPSLRRVLYRAH) lie on the Cytoplasmic side of the membrane. A helical transmembrane segment spans residues 23–43 (LGVALVAVFTAGLAVTLVGLL). The Periplasmic segment spans residues 44–154 (TLRAYADPNQ…VKGSGGSLLR (111 aa)). The helical transmembrane segment at 155 to 175 (FLLTGFAGMVLCLLLTALGAF) threads the bilayer. The Cytoplasmic portion of the chain corresponds to 176 to 435 (YLSRRLVRGI…DSATPEAPPK (260 aa)). The region spanning 183 to 236 (RGIVGPLDQLAKVAHTVRRERDFEKRVPEAGIAELSQLGEDFNALLDELESWQA) is the HAMP domain. The GGDEF domain occupies 279–415 (EQLAVLFIDS…GSRRLAELND (137 aa)). Residues Ser288 and Asp330 each coordinate Mg(2+). The Proton acceptor role is filled by Asp330. Residues 413 to 426 (LNDPRILQEEKEID) are compositionally biased toward basic and acidic residues. A disordered region spans residues 413–435 (LNDPRILQEEKEIDSATPEAPPK).

In terms of assembly, homodimer. Interacts with YfiR. It depends on Mg(2+) as a cofactor. Post-translationally, phosphorylated at both Tyr residues and Ser/Thr residues. Dephosphorylated and inactivated by TpbA.

The protein localises to the cell inner membrane. It catalyses the reaction 2 GTP = 3',3'-c-di-GMP + 2 diphosphate. The protein operates within purine metabolism; 3',5'-cyclic di-GMP biosynthesis. Activity is tightly controlled by YfiR, a small periplasmic protein, and the OmpA/Pal-like outer-membrane lipoprotein YfiB. Diguanylate cyclase activity is inhibited by the specific interaction of YfiR with the TpbB periplasmic domain and is activated by YfiB, which releases the YfiR-mediated repression through sequestration of YfiR to the outer membrane. Release of repression leads to a conformational shift in TpbB/YfiN that propagates through the PAS and transmembrane domains to switch the cytoplasmic HAMP domain from an inactive to an active conformation and activate the C-terminal catalytic GGDEF domain. Thus, TpbB/YfiN appears to function by switching between discrete inactive and active functional states depending on the presence or absence of bound YfiR. Activity is also controlled by dephosphorylation of the periplasmic domain by the tyrosine phosphatase TpbA. These two mechanisms of regulation could in principle work in parallel or as part of the same regulatory pathway. Does not undergo product feedback inhibition. In terms of biological role, catalyzes the synthesis of cyclic-di-GMP (c-di-GMP) via the condensation of 2 GTP molecules. Part of the YfiB-TpbB-YfiR (or yfiBNR) system, encoding a tripartite signaling module that modulates intracellular c-di-GMP levels. The system is a key regulator of the small colony variant (SCV) phenotype, and plays an important role in biofilm formation and in vivo persistence. The c-di-GMP produced by TpbB/YfiN stimulates the production of the Pel and Psl exopolysaccharides, which promotes surface attachment, generates an SCV phenotype and confers resistance against phagocytosis. This is Diguanylate cyclase TpbB from Pseudomonas aeruginosa (strain ATCC 15692 / DSM 22644 / CIP 104116 / JCM 14847 / LMG 12228 / 1C / PRS 101 / PAO1).